The following is a 328-amino-acid chain: Methionyl-tRNA formyltransferase (328 aa).

(6S)-5,6,7,8-tetrahydrofolate is bound at residue 110–113 (SLLP).

Belongs to the Fmt family.

The enzyme catalyses L-methionyl-tRNA(fMet) + (6R)-10-formyltetrahydrofolate = N-formyl-L-methionyl-tRNA(fMet) + (6S)-5,6,7,8-tetrahydrofolate + H(+). Its function is as follows. Attaches a formyl group to the free amino group of methionyl-tRNA(fMet). The formyl group appears to play a dual role in the initiator identity of N-formylmethionyl-tRNA by promoting its recognition by IF2 and preventing the misappropriation of this tRNA by the elongation apparatus. The chain is Methionyl-tRNA formyltransferase from Prochlorococcus marinus (strain MIT 9515).